The following is a 94-amino-acid chain: Large ribosomal subunit protein bL27 (94 aa).

The propeptide occupies 1 to 9 (MLRLDLQFF).

This sequence belongs to the bacterial ribosomal protein bL27 family. Part of the 50S ribosomal subunit. The N-terminus is cleaved by ribosomal processing cysteine protease Prp.

Its function is as follows. Plays a role in sporulation at high temperatures. The protein is Large ribosomal subunit protein bL27 (rpmA) of Bacillus subtilis (strain 168).